Consider the following 401-residue polypeptide: Probable tRNA sulfurtransferase (401 aa).

The region spanning 60–165 (EPIIDKLKTV…QDGTYVTCHD (106 aa)) is the THUMP domain. ATP contacts are provided by residues 183–184 (ML), 208–209 (HF), arginine 265, glycine 287, and glutamine 296.

Belongs to the ThiI family.

The protein resides in the cytoplasm. The catalysed reaction is [ThiI sulfur-carrier protein]-S-sulfanyl-L-cysteine + a uridine in tRNA + 2 reduced [2Fe-2S]-[ferredoxin] + ATP + H(+) = [ThiI sulfur-carrier protein]-L-cysteine + a 4-thiouridine in tRNA + 2 oxidized [2Fe-2S]-[ferredoxin] + AMP + diphosphate. It catalyses the reaction [ThiS sulfur-carrier protein]-C-terminal Gly-Gly-AMP + S-sulfanyl-L-cysteinyl-[cysteine desulfurase] + AH2 = [ThiS sulfur-carrier protein]-C-terminal-Gly-aminoethanethioate + L-cysteinyl-[cysteine desulfurase] + A + AMP + 2 H(+). It participates in cofactor biosynthesis; thiamine diphosphate biosynthesis. Functionally, catalyzes the ATP-dependent transfer of a sulfur to tRNA to produce 4-thiouridine in position 8 of tRNAs, which functions as a near-UV photosensor. Also catalyzes the transfer of sulfur to the sulfur carrier protein ThiS, forming ThiS-thiocarboxylate. This is a step in the synthesis of thiazole, in the thiamine biosynthesis pathway. The sulfur is donated as persulfide by IscS. In Geobacillus thermodenitrificans (strain NG80-2), this protein is Probable tRNA sulfurtransferase.